The primary structure comprises 88 residues: Putative septation protein SpoVG (88 aa).

Belongs to the SpoVG family.

Its function is as follows. Could be involved in septation. The sequence is that of Putative septation protein SpoVG from Lachnospira eligens (strain ATCC 27750 / DSM 3376 / VPI C15-48 / C15-B4) (Eubacterium eligens).